Here is a 286-residue protein sequence, read N- to C-terminus: 4-hydroxy-3-methylbut-2-enyl diphosphate reductase (286 aa).

[4Fe-4S] cluster is bound at residue Cys-12. The (2E)-4-hydroxy-3-methylbut-2-enyl diphosphate site is built by His-47 and His-80. The dimethylallyl diphosphate site is built by His-47 and His-80. The isopentenyl diphosphate site is built by His-47 and His-80. Cys-102 is a binding site for [4Fe-4S] cluster. (2E)-4-hydroxy-3-methylbut-2-enyl diphosphate is bound at residue His-130. Dimethylallyl diphosphate is bound at residue His-130. His-130 contacts isopentenyl diphosphate. The active-site Proton donor is the Glu-132. Thr-170 is a (2E)-4-hydroxy-3-methylbut-2-enyl diphosphate binding site. [4Fe-4S] cluster is bound at residue Cys-198. (2E)-4-hydroxy-3-methylbut-2-enyl diphosphate is bound by residues Ser-226, Asn-228, and Ser-270. Ser-226, Asn-228, and Ser-270 together coordinate dimethylallyl diphosphate. Ser-226, Asn-228, and Ser-270 together coordinate isopentenyl diphosphate.

Belongs to the IspH family. The cofactor is [4Fe-4S] cluster.

The enzyme catalyses isopentenyl diphosphate + 2 oxidized [2Fe-2S]-[ferredoxin] + H2O = (2E)-4-hydroxy-3-methylbut-2-enyl diphosphate + 2 reduced [2Fe-2S]-[ferredoxin] + 2 H(+). It carries out the reaction dimethylallyl diphosphate + 2 oxidized [2Fe-2S]-[ferredoxin] + H2O = (2E)-4-hydroxy-3-methylbut-2-enyl diphosphate + 2 reduced [2Fe-2S]-[ferredoxin] + 2 H(+). The protein operates within isoprenoid biosynthesis; dimethylallyl diphosphate biosynthesis; dimethylallyl diphosphate from (2E)-4-hydroxy-3-methylbutenyl diphosphate: step 1/1. Its pathway is isoprenoid biosynthesis; isopentenyl diphosphate biosynthesis via DXP pathway; isopentenyl diphosphate from 1-deoxy-D-xylulose 5-phosphate: step 6/6. Functionally, catalyzes the conversion of 1-hydroxy-2-methyl-2-(E)-butenyl 4-diphosphate (HMBPP) into a mixture of isopentenyl diphosphate (IPP) and dimethylallyl diphosphate (DMAPP). Acts in the terminal step of the DOXP/MEP pathway for isoprenoid precursor biosynthesis. The protein is 4-hydroxy-3-methylbut-2-enyl diphosphate reductase of Desulfovibrio desulfuricans (strain ATCC 27774 / DSM 6949 / MB).